The following is a 488-amino-acid chain: ATP synthase subunit beta (488 aa).

Residue 164-171 (GGAGVGKT) coordinates ATP.

It belongs to the ATPase alpha/beta chains family. As to quaternary structure, F-type ATPases have 2 components, CF(1) - the catalytic core - and CF(0) - the membrane proton channel. CF(1) has five subunits: alpha(3), beta(3), gamma(1), delta(1), epsilon(1). CF(0) has four main subunits: a(1), b(1), b'(1) and c(9-12).

The protein localises to the cellular thylakoid membrane. It catalyses the reaction ATP + H2O + 4 H(+)(in) = ADP + phosphate + 5 H(+)(out). Produces ATP from ADP in the presence of a proton gradient across the membrane. The catalytic sites are hosted primarily by the beta subunits. This chain is ATP synthase subunit beta, found in Prochlorococcus marinus (strain NATL1A).